Reading from the N-terminus, the 355-residue chain is 3-dehydroquinate synthase (355 aa).

Residues E71–K76, G105–D109, T129–S130, K142, and K151 contribute to the NAD(+) site. The Zn(2+) site is built by E184, H246, and H263.

This sequence belongs to the sugar phosphate cyclases superfamily. Dehydroquinate synthase family. Co(2+) serves as cofactor. Requires Zn(2+) as cofactor. The cofactor is NAD(+).

It is found in the cytoplasm. It catalyses the reaction 7-phospho-2-dehydro-3-deoxy-D-arabino-heptonate = 3-dehydroquinate + phosphate. Its pathway is metabolic intermediate biosynthesis; chorismate biosynthesis; chorismate from D-erythrose 4-phosphate and phosphoenolpyruvate: step 2/7. In terms of biological role, catalyzes the conversion of 3-deoxy-D-arabino-heptulosonate 7-phosphate (DAHP) to dehydroquinate (DHQ). This is 3-dehydroquinate synthase from Streptococcus thermophilus (strain ATCC BAA-491 / LMD-9).